The sequence spans 403 residues: Esterase LipC (403 aa).

Catalysis depends on residues S237, D334, and H367.

It belongs to the 'GDXG' lipolytic enzyme family.

The protein localises to the cell surface. Its subcellular location is the secreted. It localises to the cell wall. The protein resides in the capsule. It catalyses the reaction a fatty acid ester + H2O = an aliphatic alcohol + a fatty acid + H(+). The catalysed reaction is a butanoate ester + H2O = an aliphatic alcohol + butanoate + H(+). The enzyme catalyses a hexanoate ester + H2O = an aliphatic alcohol + hexanoate + H(+). It carries out the reaction an acetyl ester + H2O = an aliphatic alcohol + acetate + H(+). It catalyses the reaction an octanoate ester + H2O = an aliphatic alcohol + octanoate + H(+). The catalysed reaction is decanoate ester + H2O = decanoate + an aliphatic alcohol + H(+). In terms of biological role, esterase that can hydrolyze short-chain esters with the carbon chain containing 2 to 10 carbon atoms. Does not have lipase activity. Is highly immunogenic and elicits strong humoral immune responses in both HIV-negative (HIV-) and HIV-positive (HIV+) tuberculosis (TB) patients. Also elicits pro-inflammatory cytokine and chemokine responses from macrophages and pulmonary epithelial cells. May participate in the progression of active tuberculosis both by contributing to the utilization of lipid substrates for bacterial growth and replication, and by modulating immune responses. This Mycobacterium tuberculosis (strain ATCC 25618 / H37Rv) protein is Esterase LipC.